Here is a 78-residue protein sequence, read N- to C-terminus: Large ribosomal subunit protein bL28 (78 aa).

Belongs to the bacterial ribosomal protein bL28 family.

The polypeptide is Large ribosomal subunit protein bL28 (Legionella pneumophila (strain Paris)).